A 196-amino-acid polypeptide reads, in one-letter code: Heat shock protein beta-8 (196 aa).

Serine 24 and serine 57 each carry phosphoserine. At threonine 63 the chain carries Phosphothreonine; by PKC; in vitro. Asymmetric dimethylarginine is present on residues arginine 71 and arginine 78. Residues 74-185 form the sHSP domain; it reads TATARFGVPA…TFGESSFNNE (112 aa). Residues 176–196 form a disordered region; that stretch reads TFGESSFNNELPQDSQEVTCT. Residues 177–196 show a composition bias toward polar residues; that stretch reads FGESSFNNELPQDSQEVTCT.

The protein belongs to the small heat shock protein (HSP20) family. As to quaternary structure, monomer. Forms a ternary complex with BAG3 and HSPA1A. Component of the chaperone-assisted selective autophagy (CASA) complex consisting of BAG3, HSPA8/HSC70, HSPB8 and STUB1/CHIP. Interacts with HSPB1. Interacts with DNAJB6. Interacts with BAG3. In terms of tissue distribution, predominantly expressed in skeletal muscle and heart.

It is found in the cytoplasm. The protein localises to the nucleus. Its function is as follows. Involved in the chaperone-assisted selective autophagy (CASA), a crucial process for protein quality control, particularly in mechanical strained cells and tissues such as muscle. Displays temperature-dependent chaperone activity. In Homo sapiens (Human), this protein is Heat shock protein beta-8 (HSPB8).